Reading from the N-terminus, the 364-residue chain is Protein Bop (364 aa).

Positions 66–88 (STASGTCGGKPAERGPLAGHMPS) are disordered. The BH3 signature appears at 114–128 (LDRFLAQLGDYMSFH). The disordered stretch occupies residues 258-364 (QLTKESTPGP…PGEPPLSPGF (107 aa)). 2 stretches are compositionally biased toward pro residues: residues 311–322 (AQRPDPAHPGGP) and 355–364 (PGEPPLSPGF).

In terms of assembly, interacts (via BH3 domain) with VDAC1. Interacts with pro-survival Bcl-2 family members, BCL2, BCL2L1 isoform Bcl-X(L), MCL1, BCL2A1 and BCL2L2. Interacts with BAX and BAK1. Ubiquitously expressed.

The protein localises to the mitochondrion. Functionally, could induce apoptosis in a BH3 domain-dependent manner. The direct interaction network of Bcl-2 family members may play a key role in modulation RTL10/BOP intrinsic apoptotic signaling activity. This chain is Protein Bop, found in Homo sapiens (Human).